A 365-amino-acid chain; its full sequence is tRNA/tmRNA (uracil-C(5))-methyltransferase (365 aa).

S-adenosyl-L-methionine contacts are provided by Q189, Y217, N222, E238, and D298. Residue C323 is the Nucleophile of the active site. The Proton acceptor role is filled by E357.

The protein belongs to the class I-like SAM-binding methyltransferase superfamily. RNA M5U methyltransferase family. TrmA subfamily.

The catalysed reaction is uridine(54) in tRNA + S-adenosyl-L-methionine = 5-methyluridine(54) in tRNA + S-adenosyl-L-homocysteine + H(+). It catalyses the reaction uridine(341) in tmRNA + S-adenosyl-L-methionine = 5-methyluridine(341) in tmRNA + S-adenosyl-L-homocysteine + H(+). Functionally, dual-specificity methyltransferase that catalyzes the formation of 5-methyluridine at position 54 (m5U54) in all tRNAs, and that of position 341 (m5U341) in tmRNA (transfer-mRNA). This Shewanella pealeana (strain ATCC 700345 / ANG-SQ1) protein is tRNA/tmRNA (uracil-C(5))-methyltransferase.